A 172-amino-acid polypeptide reads, in one-letter code: Small ribosomal subunit protein uS5 (172 aa).

Residues 17 to 80 (LREKMISVNR…EQARRNMFKV (64 aa)) form the S5 DRBM domain.

It belongs to the universal ribosomal protein uS5 family. Part of the 30S ribosomal subunit. Contacts proteins S4 and S8.

Its function is as follows. With S4 and S12 plays an important role in translational accuracy. Functionally, located at the back of the 30S subunit body where it stabilizes the conformation of the head with respect to the body. This Paraburkholderia phymatum (strain DSM 17167 / CIP 108236 / LMG 21445 / STM815) (Burkholderia phymatum) protein is Small ribosomal subunit protein uS5.